The sequence spans 820 residues: Probable ATP-dependent RNA helicase DDX23 (820 aa).

The segment covering 1–42 has biased composition (basic and acidic residues); that stretch reads MAGELADKKDRDASPSKEERKRSRTPDRERDRDRDRKSSPSK. The disordered stretch occupies residues 1-244; that stretch reads MAGELADKKD…QKIREEKDKS (244 aa). Residues Ser-14 and Ser-16 each carry the phosphoserine modification. The span at 43-65 shows a compositional bias: basic residues; the sequence is DRKRHRSRDRRRGGSRSRSRSRS. Basic and acidic residues predominate over residues 66-105; that stretch reads KSAERERRHKERERDKERDRNKKDRDRDKDGHRRDKDRKR. Ser-107 and Ser-109 each carry phosphoserine. Basic and acidic residues-rich tracts occupy residues 112-137, 147-226, and 233-244; these read RGKDFKSRKDRDSKKDEEDEHGDKKP, LLAK…RETN, and GRQKIREEKDKS. The short motif at 391–419 is the Q motif element; that stretch reads RSWKDSSLPPHILEVIDKCGYKEPTPIQR. The Helicase ATP-binding domain occupies 422-627; it reads IPIGLQNRDI…RSYLRRPAVV (206 aa). 435–442 is an ATP binding site; it reads AETGSGKT. The short motif at 549–552 is the DEAD box element; that stretch reads DEAD. One can recognise a Helicase C-terminal domain in the interval 651–799; the sequence is KRKKLLAILE…SCPPELANHP (149 aa). Residues Lys-686 and Lys-811 each participate in a glycyl lysine isopeptide (Lys-Gly) (interchain with G-Cter in SUMO2) cross-link.

It belongs to the DEAD box helicase family. DDX23/PRP28 subfamily. In terms of assembly, the phosphorylated form (by SRPK2) is a component of the U4/U6-U5 tri-snRNP complex composed of the U4, U6 and U5 snRNAs and at least PRPF3, PRPF4, PRPF6, PRPF8, PRPF31, SNRNP200, TXNL4A, WDR57, SNRNP40, DDX23, CD2BP2, PPIH, SNU13, EFTUD2, SART1 and USP39. Identified in the spliceosome C complex. Interacts with ERBB4. Interacts with ERCC6. Post-translationally, in vitro phosphorylated by CLK1 and U1 snRNP-associated protein kinase. Phosphorylated by SRPK2 and this phosphorylation is required for its association with the tri-snRNP (U4/U6-U5 tri-small nuclear ribonucleoproteins) and subsequent spliceosomal B complex formation. May be phosphorylated by SRPK2 on Ser residues in the SR domain; the phosphorylation is required for the removal of inappropriate R-loops during transcription.

Its subcellular location is the nucleus. The protein localises to the chromosome. It catalyses the reaction ATP + H2O = ADP + phosphate + H(+). Involved in pre-mRNA splicing and its phosphorylated form (by SRPK2) is required for spliceosomal B complex formation. Independently of its spliceosome formation function, required for the suppression of incorrect R-loops formed during transcription; R-loops are composed of a DNA:RNA hybrid and the associated non-template single-stranded DNA. The chain is Probable ATP-dependent RNA helicase DDX23 from Homo sapiens (Human).